A 92-amino-acid chain; its full sequence is Small ribosomal subunit protein uS19 (92 aa).

The protein belongs to the universal ribosomal protein uS19 family.

Its function is as follows. Protein S19 forms a complex with S13 that binds strongly to the 16S ribosomal RNA. The sequence is that of Small ribosomal subunit protein uS19 from Staphylococcus epidermidis (strain ATCC 35984 / DSM 28319 / BCRC 17069 / CCUG 31568 / BM 3577 / RP62A).